Consider the following 411-residue polypeptide: Histidine--tRNA ligase (411 aa).

This sequence belongs to the class-II aminoacyl-tRNA synthetase family. In terms of assembly, homodimer.

The protein resides in the cytoplasm. The enzyme catalyses tRNA(His) + L-histidine + ATP = L-histidyl-tRNA(His) + AMP + diphosphate + H(+). This is Histidine--tRNA ligase from Dictyoglomus turgidum (strain DSM 6724 / Z-1310).